Consider the following 251-residue polypeptide: Isopentenyl-diphosphate delta-isomerase (251 aa).

Lysine 49 contacts substrate. The Mg(2+) site is built by histidine 53 and histidine 66. In terms of domain architecture, Nudix hydrolase spans 64–212; the sequence is LLHRAFSVFL…SNSFTPWFKL (149 aa). 2 residues coordinate substrate: arginine 86 and lysine 90. Cysteine 102 is a catalytic residue. A substrate-binding site is contributed by serine 103. Mg(2+)-binding residues include glutamate 162 and glutamate 164. Residue glutamate 164 is part of the active site.

The protein belongs to the IPP isomerase type 1 family. Mg(2+) is required as a cofactor.

The protein localises to the cytoplasm. It catalyses the reaction isopentenyl diphosphate = dimethylallyl diphosphate. Its pathway is isoprenoid biosynthesis; dimethylallyl diphosphate biosynthesis; dimethylallyl diphosphate from isopentenyl diphosphate: step 1/1. In terms of biological role, isopentenyl-diphosphate delta-isomerase; part of the second module of ergosterol biosynthesis pathway that includes the middle steps of the pathway. The second module is carried out in the vacuole and involves the formation of farnesyl diphosphate, which is also an important intermediate in the biosynthesis of ubiquinone, dolichol, heme and prenylated proteins. Activity by the mevalonate kinase first converts mevalonate into 5-phosphomevalonate. 5-phosphomevalonate is then further converted to 5-diphosphomevalonate by the phosphomevalonate kinase. The diphosphomevalonate decarboxylase then produces isopentenyl diphosphate. The isopentenyl-diphosphate delta-isomerase then catalyzes the 1,3-allylic rearrangement of the homoallylic substrate isopentenyl (IPP) to its highly electrophilic allylic isomer, dimethylallyl diphosphate (DMAPP). Finally the farnesyl diphosphate synthase catalyzes the sequential condensation of isopentenyl pyrophosphate with dimethylallyl pyrophosphate, and then with the resultant geranylpyrophosphate to the ultimate product farnesyl pyrophosphate. In Phaffia rhodozyma (Yeast), this protein is Isopentenyl-diphosphate delta-isomerase.